The sequence spans 256 residues: Transcription factor BHLH094 (256 aa).

The tract at residues 1 to 125 (MDPAPSLAAE…TPPEPPKQDY (125 aa)) is disordered. Residues 79-97 (PEAKRLKPMKSSDKNDSLR) are compositionally biased toward basic and acidic residues. The basic motif; degenerate stretch occupies residues 134–147 (QATDSHSLAERARR). In terms of domain architecture, bHLH spans 134-184 (QATDSHSLAERARREKISERMKILQDLVPGCNKVIGKASVLDEIINYIQSL). Residues 148–184 (EKISERMKILQDLVPGCNKVIGKASVLDEIINYIQSL) are helix-loop-helix motif.

It belongs to the bHLH protein family. Interacts with RSS3. Forms a ternary complex with RSS3 and TIFY11A/JAZ9 in the nucleus.

The protein resides in the nucleus. Transcription factor that forms a ternary complex with RSS3 and TIFY11A/JAZ9 to negatively regulate jasmonate-responsive genes. In Oryza sativa subsp. japonica (Rice), this protein is Transcription factor BHLH094.